A 657-amino-acid polypeptide reads, in one-letter code: Tetracycline resistance protein TetQ (657 aa).

The region spanning 17 to 260 (MNIINLGILA…AISSFILPPE (244 aa)) is the tr-type G domain. GTP contacts are provided by residues 26–33 (AHIDAGKT), 90–94 (DTPGH), and 144–147 (NKID).

Belongs to the TRAFAC class translation factor GTPase superfamily. Classic translation factor GTPase family. TetM/TetO subfamily.

Abolishes the inhibitory effect of tetracycline on protein synthesis by non-covalently modifying ribosomes. Confers mild resistance to tetracycline when expressed in E.coli. The polypeptide is Tetracycline resistance protein TetQ (tetQ) (Bacteroides fragilis).